Here is a 32-residue protein sequence, read N- to C-terminus: Small ribosomal subunit protein uS19 (32 aa).

Belongs to the universal ribosomal protein uS19 family.

Protein S19 forms a complex with S13 that binds strongly to the 16S ribosomal RNA. This Yersinia enterocolitica protein is Small ribosomal subunit protein uS19 (rpsS).